The primary structure comprises 154 residues: Large ribosomal subunit protein uL13 (154 aa).

This sequence belongs to the universal ribosomal protein uL13 family. In terms of assembly, part of the 50S ribosomal subunit.

This protein is one of the early assembly proteins of the 50S ribosomal subunit, although it is not seen to bind rRNA by itself. It is important during the early stages of 50S assembly. The chain is Large ribosomal subunit protein uL13 from Brucella anthropi (strain ATCC 49188 / DSM 6882 / CCUG 24695 / JCM 21032 / LMG 3331 / NBRC 15819 / NCTC 12168 / Alc 37) (Ochrobactrum anthropi).